The primary structure comprises 179 residues: Interleukin-10 (179 aa).

A signal peptide spans 1–19 (MPSSSALLCCLVFLAGVAA). Disulfide bonds link cysteine 31/cysteine 127 and cysteine 81/cysteine 133. N-linked (GlcNAc...) asparagine glycosylation occurs at asparagine 135.

It belongs to the IL-10 family. In terms of assembly, homodimer. Interacts with IL10RA and IL10RB.

It localises to the secreted. Major immune regulatory cytokine that acts on many cells of the immune system where it has profound anti-inflammatory functions, limiting excessive tissue disruption caused by inflammation. Mechanistically, IL10 binds to its heterotetrameric receptor comprising IL10RA and IL10RB leading to JAK1 and STAT2-mediated phosphorylation of STAT3. In turn, STAT3 translocates to the nucleus where it drives expression of anti-inflammatory mediators. Targets antigen-presenting cells (APCs) such as macrophages and monocytes and inhibits their release of pro-inflammatory cytokines including granulocyte-macrophage colony-stimulating factor /GM-CSF, granulocyte colony-stimulating factor/G-CSF, IL-1 alpha, IL-1 beta, IL-6, IL-8 and TNF-alpha. Also interferes with antigen presentation by reducing the expression of MHC-class II and co-stimulatory molecules, thereby inhibiting their ability to induce T cell activation. In addition, controls the inflammatory response of macrophages by reprogramming essential metabolic pathways including mTOR signaling. This Bubalus carabanensis (Swamp type water buffalo) protein is Interleukin-10 (IL10).